A 119-amino-acid chain; its full sequence is Large ribosomal subunit protein uL18 (119 aa).

The protein belongs to the universal ribosomal protein uL18 family. Part of the 50S ribosomal subunit; part of the 5S rRNA/L5/L18/L25 subcomplex. Contacts the 5S and 23S rRNAs.

In terms of biological role, this is one of the proteins that bind and probably mediate the attachment of the 5S RNA into the large ribosomal subunit, where it forms part of the central protuberance. This Ruegeria sp. (strain TM1040) (Silicibacter sp.) protein is Large ribosomal subunit protein uL18.